Here is a 123-residue protein sequence, read N- to C-terminus: Small ribosomal subunit protein uS13 (123 aa).

The segment at 97–123 (PVRGQRTHTNAKTRKGRSKLPVAAKKK) is disordered.

It belongs to the universal ribosomal protein uS13 family. In terms of assembly, part of the 30S ribosomal subunit. Forms a loose heterodimer with protein S19. Forms two bridges to the 50S subunit in the 70S ribosome.

Located at the top of the head of the 30S subunit, it contacts several helices of the 16S rRNA. In the 70S ribosome it contacts the 23S rRNA (bridge B1a) and protein L5 of the 50S subunit (bridge B1b), connecting the 2 subunits; these bridges are implicated in subunit movement. Contacts the tRNAs in the A and P-sites. The protein is Small ribosomal subunit protein uS13 of Ehrlichia chaffeensis (strain ATCC CRL-10679 / Arkansas).